Consider the following 205-residue polypeptide: Urease accessory protein UreG 1 (205 aa).

A GTP-binding site is contributed by 14–21 (GPVGSGKT).

This sequence belongs to the SIMIBI class G3E GTPase family. UreG subfamily. Homodimer. UreD, UreF and UreG form a complex that acts as a GTP-hydrolysis-dependent molecular chaperone, activating the urease apoprotein by helping to assemble the nickel containing metallocenter of UreC. The UreE protein probably delivers the nickel.

Its subcellular location is the cytoplasm. Facilitates the functional incorporation of the urease nickel metallocenter. This process requires GTP hydrolysis, probably effectuated by UreG. The chain is Urease accessory protein UreG 1 from Methylobacterium radiotolerans (strain ATCC 27329 / DSM 1819 / JCM 2831 / NBRC 15690 / NCIMB 10815 / 0-1).